A 702-amino-acid chain; its full sequence is Ribosomal RNA large subunit methyltransferase K/L (702 aa).

The THUMP domain maps to Leu43 to Leu154.

The protein belongs to the methyltransferase superfamily. RlmKL family.

The protein localises to the cytoplasm. The enzyme catalyses guanosine(2445) in 23S rRNA + S-adenosyl-L-methionine = N(2)-methylguanosine(2445) in 23S rRNA + S-adenosyl-L-homocysteine + H(+). It catalyses the reaction guanosine(2069) in 23S rRNA + S-adenosyl-L-methionine = N(2)-methylguanosine(2069) in 23S rRNA + S-adenosyl-L-homocysteine + H(+). Its function is as follows. Specifically methylates the guanine in position 2445 (m2G2445) and the guanine in position 2069 (m7G2069) of 23S rRNA. This chain is Ribosomal RNA large subunit methyltransferase K/L, found in Shigella boydii serotype 18 (strain CDC 3083-94 / BS512).